A 514-amino-acid chain; its full sequence is 2-isopropylmalate synthase (514 aa).

Positions 4-266 constitute a Pyruvate carboxyltransferase domain; that stretch reads INVFDTSLRD…KTGLKLSELK (263 aa). Positions 13, 201, 203, and 237 each coordinate Mn(2+). Positions 390-514 are regulatory domain; sequence ELTALQVTYG…AKREMAKVES (125 aa).

Belongs to the alpha-IPM synthase/homocitrate synthase family. LeuA type 1 subfamily. As to quaternary structure, homodimer. Mn(2+) is required as a cofactor.

The protein resides in the cytoplasm. It carries out the reaction 3-methyl-2-oxobutanoate + acetyl-CoA + H2O = (2S)-2-isopropylmalate + CoA + H(+). It participates in amino-acid biosynthesis; L-leucine biosynthesis; L-leucine from 3-methyl-2-oxobutanoate: step 1/4. In terms of biological role, catalyzes the condensation of the acetyl group of acetyl-CoA with 3-methyl-2-oxobutanoate (2-ketoisovalerate) to form 3-carboxy-3-hydroxy-4-methylpentanoate (2-isopropylmalate). This chain is 2-isopropylmalate synthase, found in Shouchella clausii (strain KSM-K16) (Alkalihalobacillus clausii).